The primary structure comprises 1167 residues: RNA-directed RNA polymerase (1167 aa).

The region spanning 553-735 (LTYGILAEAT…KALASYTGLE (183 aa)) is the RdRp catalytic domain.

This sequence belongs to the reoviridae RNA-directed RNA polymerase family. In terms of assembly, interacts with VP3 (Potential). Interacts with VP2 (Potential). Interacts with NSP5; this interaction is probably necessary for the formation of functional virus factories.

It is found in the virion. It carries out the reaction RNA(n) + a ribonucleoside 5'-triphosphate = RNA(n+1) + diphosphate. Its function is as follows. RNA-directed RNA polymerase that is involved in both transcription and genome replication. Together with VP3 capping enzyme, forms an enzyme complex positioned near the channels situated at each of the five-fold vertices of the core. Following infection, the outermost layer of the virus is lost, leaving a double-layered particle (DLP) made up of the core and VP6 shell. VP1 then catalyzes the transcription of fully conservative plus-strand genomic RNAs that are extruded through the DLP's channels into the cytoplasm where they function as mRNAs for translation of viral proteins. One copy of each of the viral (+)RNAs is also recruited during core assembly, together with newly synthesized polymerase complexes and VP2. The polymerase of these novo-formed particles catalyzes the synthesis of complementary minus-strands leading to dsDNA formation. To do so, the polymerase specifically recognizes conserved 3' sequence(s) in plus-strand RNA templates. Once dsRNA synthesis is complete, the polymerase switches to the transcriptional mode, thus providing secondary transcription. The polypeptide is RNA-directed RNA polymerase (Rotavirus X (isolate RVX/Human/Bangladesh/NADRV-B219/2002/GXP[X]) (RV ADRV-N)).